Here is a 636-residue protein sequence, read N- to C-terminus: Iron transport multicopper oxidase FET3 (636 aa).

Residues 1 to 21 (MTNALLSIAVLLFSMLSLAQA) form the signal peptide. Residues 22–559 (ETHTFNWTTG…AFIPTGFTKK (538 aa)) are Extracellular-facing. Asn27, Asn74, and Asn77 each carry an N-linked (GlcNAc...) asparagine glycan. 2 Plastocyanin-like domains span residues 32–146 (WDYR…IKDD) and 157–301 (SLSL…VYNK). His81 and His83 together coordinate Cu cation. Asn88 and Asn113 each carry an N-linked (GlcNAc...) asparagine glycan. Cu cation is bound by residues His126 and His128. Residues Asn194, Asn198, Asn244, Asn265, Asn292, Asn300, Asn359, and Asn381 are each glycosylated (N-linked (GlcNAc...) asparagine). The Plastocyanin-like 3 domain maps to 362 to 502 (YTAPKVPTLM…GLGLVLVEDP (141 aa)). Residues His413, His416, His418, His483, Cys484, His485, and His489 each contribute to the Cu cation site. The chain crosses the membrane as a helical span at residues 560–584 (GIIAMTFSCFAGILGIITIAIYGMM). At 585 to 636 (DMEDATEKVIRDLHVDPEVLLNEVDENEERQVNEDRHSTEKHQFLTKAKRFF) the chain is on the cytoplasmic side.

Belongs to the multicopper oxidase family. The cofactor is Cu cation.

The protein localises to the cell membrane. It catalyses the reaction 4 Fe(2+) + O2 + 4 H(+) = 4 Fe(3+) + 2 H2O. It carries out the reaction 4 Cu(+) + O2 + 4 H(+) = 4 Cu(2+) + 2 H2O. Functionally, iron transport multicopper ferroxidase required for Fe(2+) ion high affinity uptake. Required to oxidize Fe(2+) to Fe(3+), which is then transported into the cell via the ferric iron permease FTR1. Essential component of copper-dependent iron transport. Also has cuprous oxidase activity. This is Iron transport multicopper oxidase FET3 (FET3) from Saccharomyces cerevisiae (strain ATCC 204508 / S288c) (Baker's yeast).